The sequence spans 136 residues: Large ribosomal subunit protein uL22 (136 aa).

This sequence belongs to the universal ribosomal protein uL22 family. Part of the 50S ribosomal subunit.

In terms of biological role, this protein binds specifically to 23S rRNA; its binding is stimulated by other ribosomal proteins, e.g. L4, L17, and L20. It is important during the early stages of 50S assembly. It makes multiple contacts with different domains of the 23S rRNA in the assembled 50S subunit and ribosome. Functionally, the globular domain of the protein is located near the polypeptide exit tunnel on the outside of the subunit, while an extended beta-hairpin is found that lines the wall of the exit tunnel in the center of the 70S ribosome. The chain is Large ribosomal subunit protein uL22 from Bacteroides fragilis (strain YCH46).